The following is a 192-amino-acid chain: uncharacterized protein (192 aa).

Positions 53 to 111 form a coiled coil; sequence CLKESVERARKVYLSLLKDYERKSREYEKAYENYLKELRTYRETLYRIKEDLKFYERIC.

This is an uncharacterized protein from Aquifex aeolicus (strain VF5).